A 145-amino-acid chain; its full sequence is 3-hydroxyacyl-[acyl-carrier-protein] dehydratase FabZ (145 aa).

Residue H49 is part of the active site.

The protein belongs to the thioester dehydratase family. FabZ subfamily.

Its subcellular location is the cytoplasm. The enzyme catalyses a (3R)-hydroxyacyl-[ACP] = a (2E)-enoyl-[ACP] + H2O. In terms of biological role, involved in unsaturated fatty acids biosynthesis. Catalyzes the dehydration of short chain beta-hydroxyacyl-ACPs and long chain saturated and unsaturated beta-hydroxyacyl-ACPs. In Ehrlichia ruminantium (strain Gardel), this protein is 3-hydroxyacyl-[acyl-carrier-protein] dehydratase FabZ.